Here is a 206-residue protein sequence, read N- to C-terminus: ATP-dependent Clp protease proteolytic subunit (206 aa).

Ser108 functions as the Nucleophile in the catalytic mechanism. The active site involves His133.

The protein belongs to the peptidase S14 family. As to quaternary structure, fourteen ClpP subunits assemble into 2 heptameric rings which stack back to back to give a disk-like structure with a central cavity, resembling the structure of eukaryotic proteasomes.

The protein resides in the cytoplasm. The enzyme catalyses Hydrolysis of proteins to small peptides in the presence of ATP and magnesium. alpha-casein is the usual test substrate. In the absence of ATP, only oligopeptides shorter than five residues are hydrolyzed (such as succinyl-Leu-Tyr-|-NHMec, and Leu-Tyr-Leu-|-Tyr-Trp, in which cleavage of the -Tyr-|-Leu- and -Tyr-|-Trp bonds also occurs).. Functionally, cleaves peptides in various proteins in a process that requires ATP hydrolysis. Has a chymotrypsin-like activity. Plays a major role in the degradation of misfolded proteins. The sequence is that of ATP-dependent Clp protease proteolytic subunit from Chromohalobacter salexigens (strain ATCC BAA-138 / DSM 3043 / CIP 106854 / NCIMB 13768 / 1H11).